A 171-amino-acid polypeptide reads, in one-letter code: MLP-like protein 31 (171 aa).

It belongs to the MLP family.

The chain is MLP-like protein 31 (MLP31) from Arabidopsis thaliana (Mouse-ear cress).